Reading from the N-terminus, the 477-residue chain is MTTSSNPPNSAAPNQTSGMWGGRFSEATDAFVAEFTASVQFDQRFYKQDIAGSIAHATMLAKVGVLTEAERDDIIEGLSTIRAEIEAGTFEWRIDLEDVHMNIESRLTQRIGITGKKLHTGRSRNDQVATDIRLYLRDEIDDILGLLERLQKGLLGLAAKNVNTIMPGFTHLQTAQPVTFGHHLLAWFEMLVRDTERLQDCRKRVNRMPLGSAALAGTTYPIDRAYTAELLGFEAVSENSLDAVSDRDFAIEFNAAASLIMMHLSRMSEELILWTSAQFKFVNIPDRFCTGSSIMPQKKNPDVPELIRGKSGRVFGDLISLLTLMKGQPLAYNKDNQEDKEPLFDAIDTVRGSLMAFADMIPALVPNVEIMREAALRGFSTATDLADYLVKKGVAFRDAHEIVGKAVALGVAEEKDLSELTLEQLQQFSDLITADVFDKALTLEASVNARDHIGGTSPKQVEAAIARAHKRLEQLYA.

Belongs to the lyase 1 family. Argininosuccinate lyase subfamily.

It localises to the cytoplasm. It carries out the reaction 2-(N(omega)-L-arginino)succinate = fumarate + L-arginine. It functions in the pathway amino-acid biosynthesis; L-arginine biosynthesis; L-arginine from L-ornithine and carbamoyl phosphate: step 3/3. This Acinetobacter baumannii (strain ACICU) protein is Argininosuccinate lyase.